The following is a 174-amino-acid chain: Ribulose bisphosphate carboxylase small subunit, chloroplastic (174 aa).

A chloroplast-targeting transit peptide spans 1-45; sequence MAPTVMASSATSVAPFQGLKSTAGLPVSRRSNASSASVSNGGRIR.

It belongs to the RuBisCO small chain family. As to quaternary structure, heterohexadecamer of 8 large and 8 small subunits.

Its subcellular location is the plastid. The protein resides in the chloroplast. Its function is as follows. RuBisCO catalyzes two reactions: the carboxylation of D-ribulose 1,5-bisphosphate, the primary event in carbon dioxide fixation, as well as the oxidative fragmentation of the pentose substrate. Both reactions occur simultaneously and in competition at the same active site. Although the small subunit is not catalytic it is essential for maximal activity. This chain is Ribulose bisphosphate carboxylase small subunit, chloroplastic, found in Hordeum vulgare (Barley).